A 577-amino-acid polypeptide reads, in one-letter code: Arginine--tRNA ligase (577 aa).

The 'HIGH' region signature appears at 123–133 (PNLAKEMHVGH).

Belongs to the class-I aminoacyl-tRNA synthetase family. In terms of assembly, monomer.

The protein resides in the cytoplasm. The catalysed reaction is tRNA(Arg) + L-arginine + ATP = L-arginyl-tRNA(Arg) + AMP + diphosphate. The protein is Arginine--tRNA ligase of Marinomonas sp. (strain MWYL1).